Consider the following 854-residue polypeptide: Probable inactive serine/threonine-protein kinase DDB_G0274821 (854 aa).

Residues 1-266 (MPIKESFKRI…WPKLFIHPFF (266 aa)) form the Protein kinase domain. N-linked (GlcNAc...) asparagine glycosylation is found at Asn-32 and Asn-106. The segment at 116–135 (NNNNNNNNNNNNNNNNNNNN) is disordered. Asn-163, Asn-279, Asn-283, and Asn-290 each carry an N-linked (GlcNAc...) asparagine glycan. Residues 289-331 (LNKSSSSSSSSSSSSSSSSSSSSSSSLSFQQQQQPNNISSPNL) are disordered. Positions 292 to 322 (SSSSSSSSSSSSSSSSSSSSSSSLSFQQQQQ) are enriched in low complexity. Asn-325, Asn-347, and Asn-365 each carry an N-linked (GlcNAc...) asparagine glycan. The interval 384-408 (IISPNRPSSPPLSSLSSCSSSSSSS) is disordered. A glycan (N-linked (GlcNAc...) asparagine) is linked at Asn-414. The tract at residues 425-446 (NNNNNNNNNNNNNNNNNNNNNN) is disordered. Asn-520, Asn-541, and Asn-620 each carry an N-linked (GlcNAc...) asparagine glycan. A disordered region spans residues 627 to 650 (SSPPPSSSSSSSSPSSPSSTSPSL). A compositionally biased stretch (low complexity) spans 633-650 (SSSSSSSPSSPSSTSPSL). Asn-757 carries N-linked (GlcNAc...) asparagine glycosylation. Residues 770 to 792 (HWRVQISFLNILFILITINNNFI) form a helical membrane-spanning segment.

Belongs to the protein kinase superfamily. Ser/Thr protein kinase family.

Its subcellular location is the membrane. In Dictyostelium discoideum (Social amoeba), this protein is Probable inactive serine/threonine-protein kinase DDB_G0274821.